Here is a 201-residue protein sequence, read N- to C-terminus: Large ribosomal subunit protein uL4 (201 aa).

Residues 45–71 are disordered; sequence AQKTRAEVTGSGKKPWRQKGTGRARAG.

The protein belongs to the universal ribosomal protein uL4 family. In terms of assembly, part of the 50S ribosomal subunit.

In terms of biological role, one of the primary rRNA binding proteins, this protein initially binds near the 5'-end of the 23S rRNA. It is important during the early stages of 50S assembly. It makes multiple contacts with different domains of the 23S rRNA in the assembled 50S subunit and ribosome. Forms part of the polypeptide exit tunnel. The protein is Large ribosomal subunit protein uL4 of Shewanella loihica (strain ATCC BAA-1088 / PV-4).